A 202-amino-acid polypeptide reads, in one-letter code: Imidazole glycerol phosphate synthase subunit HisH (202 aa).

In terms of domain architecture, Glutamine amidotransferase type-1 spans 3–202 (RIVILDYGLG…KILKNFVDMC (200 aa)). Cys79 acts as the Nucleophile in catalysis. Catalysis depends on residues His183 and Glu185.

Heterodimer of HisH and HisF.

Its subcellular location is the cytoplasm. It catalyses the reaction 5-[(5-phospho-1-deoxy-D-ribulos-1-ylimino)methylamino]-1-(5-phospho-beta-D-ribosyl)imidazole-4-carboxamide + L-glutamine = D-erythro-1-(imidazol-4-yl)glycerol 3-phosphate + 5-amino-1-(5-phospho-beta-D-ribosyl)imidazole-4-carboxamide + L-glutamate + H(+). It carries out the reaction L-glutamine + H2O = L-glutamate + NH4(+). It functions in the pathway amino-acid biosynthesis; L-histidine biosynthesis; L-histidine from 5-phospho-alpha-D-ribose 1-diphosphate: step 5/9. IGPS catalyzes the conversion of PRFAR and glutamine to IGP, AICAR and glutamate. The HisH subunit catalyzes the hydrolysis of glutamine to glutamate and ammonia as part of the synthesis of IGP and AICAR. The resulting ammonia molecule is channeled to the active site of HisF. The polypeptide is Imidazole glycerol phosphate synthase subunit HisH (Methanosarcina barkeri (strain Fusaro / DSM 804)).